The sequence spans 315 residues: Methenyltetrahydromethanopterin cyclohydrolase (315 aa).

The protein belongs to the MCH family.

It is found in the cytoplasm. It catalyses the reaction 5,10-methenyl-5,6,7,8-tetrahydromethanopterin + H2O = N(5)-formyl-5,6,7,8-tetrahydromethanopterin + H(+). Its pathway is one-carbon metabolism; methanogenesis from CO(2); 5,10-methenyl-5,6,7,8-tetrahydromethanopterin from CO(2): step 3/3. Functionally, catalyzes the reversible interconversion of 5-formyl-H(4)MPT to methenyl-H(4)MPT(+). This is Methenyltetrahydromethanopterin cyclohydrolase from Methanospirillum hungatei JF-1 (strain ATCC 27890 / DSM 864 / NBRC 100397 / JF-1).